The chain runs to 940 residues: Serine/threonine-protein phosphatase 1 regulatory subunit 10 (940 aa).

The interval 1-348 (MGSGPIDPKE…EPAPPSEAMD (348 aa)) is interaction with TOX4. Residues 73 to 147 (KLLNNWLTYS…SDWMAVIRSQ (75 aa)) form the TFIIS N-terminal domain. Disordered regions lie at residues 147-211 (QSST…FRST), 247-270 (SNVA…NTTP), 304-400 (KIKK…KSVT), and 533-905 (YVET…HGGD). Composition is skewed to basic and acidic residues over residues 153 to 166 (AEKD…EGKS) and 174 to 196 (PLTE…EKPK). A Glycyl lysine isopeptide (Lys-Gly) (interchain with G-Cter in SUMO2) cross-link involves residue Lys179. Thr256 is modified (phosphothreonine). Lys262 participates in a covalent cross-link: Glycyl lysine isopeptide (Lys-Gly) (interchain with G-Cter in SUMO2). Ser313 is subject to Phosphoserine. Residues 325–336 (KTSTEPSTAKPS) are compositionally biased toward low complexity. Residues 357–433 (PPVEVPELMD…NKIKDFGEAA (77 aa)) form a necessary for interaction with PPP1CA region. Ser382 is subject to Phosphoserine. The tract at residues 393–408 (GRKRKSVTWPEEGKLR) is necessary for interaction with PPP1CC. Residues 394–423 (RKRKSVTWPEEGKLREYFYFELDETERVNV) carry the PP1-binding motif motif. Ser398 carries the post-translational modification Phosphoserine; by PKA. The interaction with WDR82 stretch occupies residues 418-619 (TERVNVNKIK…IKQMLVPHGL (202 aa)). Gly residues-rich tracts occupy residues 540 to 551 (GGSGGSPDGAGG) and 565 to 579 (MGAG…GGGI). Position 545 is a phosphoserine (Ser545). Residues 583-595 (EILTSIMGSPNSH) are compositionally biased toward polar residues. Ser591 carries the phosphoserine modification. Residues 596 to 611 (PSEELLKQPDYSDKIK) show a composition bias toward basic and acidic residues. A compositionally biased stretch (pro residues) spans 644 to 655 (PPGPGGPMPGPH). Arg665 carries the omega-N-methylarginine modification. The span at 676 to 690 (GDPFWDGPGDPMRGG) shows a compositional bias: low complexity. Arg693 carries the omega-N-methylarginine modification. Residues 714–723 (EPPPPPPPPF) are compositionally biased toward pro residues. 2 stretches are compositionally biased toward gly residues: residues 726 to 764 (ARGG…GMGN) and 790 to 845 (SSMG…GSGG). Arg739 bears the Omega-N-methylarginine mark. Basic and acidic residues-rich tracts occupy residues 862–886 (PHDV…HDGP) and 894–903 (RGHDGGHSHG). A C3H1-type zinc finger spans residues 906-934 (MSNRPVCRHFMMKGNCRYENNCAFYHPGV).

Component of the PNUTS-PP1 complex (also named PTW/PP1 complex), composed of PPP1R10/PNUTS, TOX4, WDR82, and PPP1CA (or PPP1CB or PPP1CC). Phosphorylated on Ser-398 by PKA within the region necessary for interaction with PPP1CA.

It is found in the nucleus. It localises to the chromosome. Its function is as follows. Substrate-recognition component of the PNUTS-PP1 protein phosphatase complex, a protein phosphatase 1 (PP1) complex that promotes RNA polymerase II transcription pause-release, allowing transcription elongation. Promoter-proximal pausing by RNA polymerase II is a transcription halt following transcription initiation but prior to elongation, which acts as a checkpoint to control that transcripts are favorably configured for transcriptional elongation. The PNUTS-PP1 complex mediates the release of RNA polymerase II from promoter-proximal region of genes by catalyzing dephosphorylation of proteins involved in transcription, such as AFF4, CDK9, MEPCE, INTS12, NCBP1, POLR2M/GDOWN1 and SUPT6H. The PNUTS-PP1 complex also regulates RNA polymerase II transcription termination by mediating dephosphorylation of SUPT5H in termination zones downstream of poly(A) sites, thereby promoting deceleration of RNA polymerase II transcription. PNUTS-PP1 complex is also involved in the response to replication stress by mediating dephosphorylation of POLR2A at 'Ser-5' of the CTD, promoting RNA polymerase II degradation. The PNUTS-PP1 complex also plays a role in the control of chromatin structure and cell cycle progression during the transition from mitosis into interphase. PNUTS-PP1 complex mediates dephosphorylation of MYC, promoting MYC stability by preventing MYC ubiquitination by the SCF(FBXW7) complex. In addition to acts as a substrate-recognition component, PPP1R10/PNUTS also acts as a nuclear targeting subunit for the PNUTS-PP1 complex. In some context, PPP1R10/PNUTS also acts as an inhibitor of protein phosphatase 1 (PP1) activity by preventing access to substrates, such as RB. In Macaca mulatta (Rhesus macaque), this protein is Serine/threonine-protein phosphatase 1 regulatory subunit 10 (PPP1R10).